A 306-amino-acid polypeptide reads, in one-letter code: Mitochondrial uncoupling protein 1 (306 aa).

Solcar repeat units lie at residues 9–102 (LSLP…VKNL), 112–203 (VPLS…VKET), and 212–296 (DNVV…AKKY). 6 helical membrane-spanning segments follow: residues 15 to 35 (FACSAFAACVGEVCTIPLDTA), 71 to 91 (LRSLWKGVVPGLHRQCLFGGL), 118 to 138 (ILAGLTTGALGIMVANPTDLV), 177 to 197 (TGLGPNVARNAIINAAELASY), 218 to 238 (ILSGLGAGFFAVCIGSPVDVV), and 269 to 289 (YKGFIPNFGRLGSWNVIMFLT).

This sequence belongs to the mitochondrial carrier (TC 2.A.29) family. In terms of tissue distribution, widely expressed.

It localises to the mitochondrion inner membrane. PUMPS are mitochondrial transporter proteins that create proton leaks across the inner mitochondrial membrane, thus uncoupling oxidative phosphorylation. This leads to a decrease in the efficiency of oxidative phosphorylation and an increase in heat production. Is involved in protecting plant cells against oxidative stress damage and maintaining the redox balance of the mitochondrial electron transport chain to facilitate photosynthetic metabolism. May play a regulatory role during photorespiration. The polypeptide is Mitochondrial uncoupling protein 1 (PUMP1) (Arabidopsis thaliana (Mouse-ear cress)).